A 1319-amino-acid chain; its full sequence is Girdin homolog (1319 aa).

The region spanning 6-118 (ENWSHPLAFW…KLLLLLLGCA (113 aa)) is the Calponin-homology (CH) domain. Coiled-coil stretches lie at residues 141 to 173 (ELAACIQKLTESDEIVQNLEDFERRKMKETDEV), 218 to 690 (TSEL…ADLI), and 732 to 1096 (KRER…KKST). The tract at residues 166-222 (KMKETDEVGGGGGSIEDVDSDDMESSTTSSSNGEIAIKQQDQSFLMSRSTSPTSELR) is disordered. Residues 204 to 222 (QQDQSFLMSRSTSPTSELR) show a composition bias toward polar residues. Disordered regions lie at residues 1112 to 1236 (INRR…SPAH) and 1289 to 1308 (NVNLPQNPPDLPENSDLKPN). Positions 1118-1131 (TSNGGSTTEDSSVY) are enriched in polar residues.

It belongs to the CCDC88 family. Expressed in AQR and PQR gas-sensing neurons in hermaphrodites (at protein level).

It is found in the cytoplasm. The protein localises to the cytoskeleton. It localises to the cilium basal body. Its subcellular location is the microtubule organizing center. The protein resides in the centrosome. It is found in the centriole. Its function is as follows. Scaffolding protein that plays a role in ciliogenesis, cilium positioning and dendrite anchoring in sensory amphid neurons including AWB, AWA, AWC, ADL and ASI, the phasmid neurons PHA and PHB and the gas sensing neurons AQR, PQR, URX and BAG. Its role in cilium positioning may be through regulation of the localization of cell adhesion proteins such as the apical junction protein ajm-1, and the ciliary scaffolding protein Rootletin/che-10. Plays a more prominent role in regulating dendrite morphogenesis in AQR than in PQR neurons. Regulates localization of hmr-1 to the distal AQR dendrite. During embryonic elongation, required for the anchoring of URX and BAG dendrites to the presumptive nose. The sequence is that of Girdin homolog from Caenorhabditis elegans.